The following is a 367-amino-acid chain: Oleoyl-acyl carrier protein thioesterase 2, chloroplastic (367 aa).

Residues 1-48 constitute a chloroplast transit peptide; sequence MLKLSCNVTDHIHNLFSNSRRIFVPVHRQTRPISCFQLKKEPLRAILS. Active-site residues include asparagine 263, histidine 265, and cysteine 300.

It belongs to the acyl-ACP thioesterase family.

The protein localises to the plastid. The protein resides in the chloroplast. It catalyses the reaction (9Z)-octadecenoyl-[ACP] + H2O = (9Z)-octadecenoate + holo-[ACP] + H(+). Functionally, plays an essential role in chain termination during de novo fatty acid synthesis. Possesses high thioesterase activity for oleoyl-ACP versus other acyl-ACPs. The chain is Oleoyl-acyl carrier protein thioesterase 2, chloroplastic (FATA2) from Arabidopsis thaliana (Mouse-ear cress).